Consider the following 902-residue polypeptide: MLATPGALHHLLLLPPPPHTQLAFHHAVGGVPAALLPLPRPRRVAASASTSRRGGARRRAAGARVRASVGEEAPPVVTEEASTSGGPTKFSTKIPVGDRHILVETGHIGRQASASVMVTDGETIVYSSVCLADTPNDPSDFFPMSVHYQERLSAAGRTSGGFFKREGRAKDHEVLVCRLIDRPLRPTMPKGFYYETQILSWVFSYDGIHSPDSLAITAAGVAMALSEVPNKQTIAGVRVGMINDQFVVNPTTEQMDDSELDLVMAGTDSAILMIEGYCDFLTEEKLLQAVETGQGAIREICKAIDGLVQKCGKKKMFDAIDLPPPELYRHVEDISGDELVKALQIKEKILRRKALSALEEKVITILSEQGYVAKDESSGVSENLADVIEEEDEDEVIVDGEVDEGEVHIKPVSRKPPRQLFSEVDVKLVFKEVSSKFLRRRIVEGGKRSDGRSPCELRPINSQCGLLPRAHGSALFTRGETQALAVVTLGDYQMAQRIDNLVDTEESKSFYLQYTFPPSSVGEVGRIGAPNRREIGHGMLAERALEPILPPEEDFPYTIRVESTITESNGSSSMASVCGGCLALQDAGVPIKFPVAGIAMGLVLDTLEFGGDGKPLILSDITGAEDASGDMDFKVAGNENGISAFQMDIKVVGITLPIMEHALLQARDGRKHILNEMSKCSPPPAKVLSPYAPLIHVMKVKPNKVNLIIGSGGKTIKSIIEETGVDAIDTGDDGTVKITARDLSSLEKSKAIIANLTMVPKVGEIYRNCEIKTIAPYGAFVEIAPGREGLCHISELSSSWLAKAEDAFKVGDRIDVKLIEINDKGQLRLSSRALLPDANQESSSKQQAGGSTREKAPQKDNLVKMTTRRPRRKKQAEASTAENNATASPKDLASQGSEMGTE.

A chloroplast-targeting transit peptide spans methionine 1–arginine 66. Over residues valine 44 to arginine 53 the composition is skewed to low complexity. The segment at valine 44–lysine 93 is disordered. Residues glutamate 80–serine 91 show a composition bias toward polar residues. Residues proline 693–isoleucine 753 enclose the KH domain. The 70-residue stretch at glycine 763–arginine 832 folds into the S1 motif domain. Positions alanine 833–glutamate 902 are disordered. The span at asparagine 839–glycine 850 shows a compositional bias: polar residues. Residues threonine 852–leucine 862 show a composition bias toward basic and acidic residues. A compositionally biased stretch (low complexity) spans glutamate 877–serine 888.

The protein belongs to the polyribonucleotide nucleotidyltransferase family.

The protein resides in the plastid. The protein localises to the chloroplast. The enzyme catalyses RNA(n+1) + phosphate = RNA(n) + a ribonucleoside 5'-diphosphate. Involved in the metabolism of all major classes of plastid RNAs. Required for efficient 3'-end processing of mRNAs and 3'-end maturation of rRNA transcripts, but is not sufficient to mediate their degradation. Mediates tRNA degradation. May function as a poly(A) mRNA 3'-5' degrading phosphorylase. The polypeptide is Probable polyribonucleotide nucleotidyltransferase 1, chloroplastic (PNP1) (Oryza sativa subsp. japonica (Rice)).